The primary structure comprises 127 residues: Holo-[acyl-carrier-protein] synthase (127 aa).

Residues aspartate 8 and glutamate 57 each coordinate Mg(2+).

Belongs to the P-Pant transferase superfamily. AcpS family. Mg(2+) is required as a cofactor.

The protein localises to the cytoplasm. It catalyses the reaction apo-[ACP] + CoA = holo-[ACP] + adenosine 3',5'-bisphosphate + H(+). Transfers the 4'-phosphopantetheine moiety from coenzyme A to a Ser of acyl-carrier-protein. The sequence is that of Holo-[acyl-carrier-protein] synthase from Vesicomyosocius okutanii subsp. Calyptogena okutanii (strain HA).